Consider the following 638-residue polypeptide: MNAKEHFIATEAKVDEAAIAPLPNSRKIYVEGSRPDIRVPMREIRQSDTPASFGAEPNPPIFVYDCSGPYTDPAAKIDIRSGLPALRAGWIAERGDTEQLADLSSEYGRQRAADPRLDELRFPGLHRKPLRARAGANVTQMHYARRGIVTPEMEYIAIRENLRRKDYLESLLAAGPTGQKMAALLTRQHPGQNFGAAIPNEITPEFVRDEVARGRAIIPANINHPETEPMIIGRNFLVKINANIGNSALGSSIAEEVDKMTWSIRWGGDTVMDLSTGKNIHETREWIIRNSPVPIGTVPIYQALEKVDGKAEDLTWEIFRDTLIEQAEQGVDYFTIHAGVLLRYIPLTANRMTGIVSRGGSIMAKWCLAHHKESFLYTHFEDICEIMKAYDVAFSLGDGLRPGSIYDANDEAQLGELKTLGELTDIAWKHDVQVMIEGPGHVPLHMIKENMDLQLEQCKEAPFYTLGPLTTDIAPGYDHITSGIGAATIGWYGTAMLCYVTPKEHLGLPNKQDVKEGIITYKLAAHAADLAKGHPGAQIRDNALSKARFEFRWEDQFNLGLDPDKAKEFHDETLPKESAKVAHFCSMCGPHFCSMKITQDVRDFAAQQGVDEAEALQKGMEVKAVEFVKSGAEVYRNV.

Substrate is bound by residues N243, M272, Y301, H337, 357 to 359, 398 to 401, and E437; these read SRG and DGLR. A Zn(2+)-binding site is contributed by H441. Y464 contributes to the substrate binding site. H505 lines the Zn(2+) pocket. [4Fe-4S] cluster-binding residues include C585, C588, and C593.

It belongs to the ThiC family. As to quaternary structure, homodimer. The cofactor is [4Fe-4S] cluster.

It carries out the reaction 5-amino-1-(5-phospho-beta-D-ribosyl)imidazole + S-adenosyl-L-methionine = 4-amino-2-methyl-5-(phosphooxymethyl)pyrimidine + CO + 5'-deoxyadenosine + formate + L-methionine + 3 H(+). Its pathway is cofactor biosynthesis; thiamine diphosphate biosynthesis. Its function is as follows. Catalyzes the synthesis of the hydroxymethylpyrimidine phosphate (HMP-P) moiety of thiamine from aminoimidazole ribotide (AIR) in a radical S-adenosyl-L-methionine (SAM)-dependent reaction. The sequence is that of Phosphomethylpyrimidine synthase from Azoarcus sp. (strain BH72).